We begin with the raw amino-acid sequence, 382 residues long: uncharacterized protein (382 aa).

11 helical membrane-spanning segments follow: residues 8–28 (VLLL…LNTL), 41–61 (WQVG…TLIA), 73–93 (SYHC…LTVD), 94–114 (FWSW…IWVI), 133–153 (AAYM…LGIV), 157–177 (LLSV…PLLF), 208–228 (GCII…LYLS), 235–255 (ASVG…QWPM), 274–294 (VVIL…ALFI), 325–345 (ALLM…SLLM), and 349–369 (SDNL…MMLL).

It belongs to the major facilitator superfamily. YcaD (TC 2.A.1.26) family.

Its subcellular location is the cell inner membrane. This is an uncharacterized protein from Yersinia pseudotuberculosis serotype IB (strain PB1/+).